The primary structure comprises 176 residues: Tumor necrosis factor receptor superfamily member 23 (176 aa).

The first 29 residues, 1-29, serve as a signal peptide directing secretion; it reads MVTFSHVSSLSHWFLLLLLLNLFLPVIFA. TNFR-Cys repeat units lie at residues 37–72, 74–114, and 115–155; these read NCPD…QGQC, KCHP…DRKC, and ECQI…NTVC. 9 disulfide bridges follow: Cys-38-Cys-49, Cys-50-Cys-63, Cys-53-Cys-72, Cys-75-Cys-90, Cys-93-Cys-106, Cys-96-Cys-114, Cys-116-Cys-131, Cys-134-Cys-147, and Cys-137-Cys-155. N-linked (GlcNAc...) asparagine glycosylation is present at Asn-148. Cys-155 is lipidated: GPI-anchor amidated cysteine. Positions 156–176 are cleaved as a propeptide — removed in mature form; it reads SSSVSNPRNWLFLLMLIVFCI.

In terms of tissue distribution, ubiquitous.

The protein resides in the cell membrane. Functionally, receptor for the cytotoxic ligand TRAIL. Lacks a cytoplasmic death domain and hence is not capable of inducing apoptosis. May protect cells against TRAIL mediated apoptosis through ligand competition. Cannot induce the NF-kappa-B pathway. The sequence is that of Tumor necrosis factor receptor superfamily member 23 (Tnfrsf23) from Mus musculus (Mouse).